Reading from the N-terminus, the 426-residue chain is MQKSEALFTRAQKTIPGGVNSPVRAFKAVGGTPRFITKADGAYMWDADGKQYIDYIQSWGPMILGHNNAPIREAVIEASCSGLSFGAPTEAEVIMAELVSEMVPSMEMVRMVNSGTEATMSAIRLARGYTSRNKIVKFEGCYHGHADSLLVKAGSGALTLGVPSSPGVPANVAEHTLTVEFNNLDSVKEIFETHGDDIACIIVEPVAGNMNCIPPVEGFLEGLRAICDQYGSVLIFDEVMTGFRVSRGGAQERFNVKPDLTCLGKVIGGGMPVGCFGGRRDIITHIAPTGPVYQAGTLSGNPVAMAAGLAALTQIKQPGLYDSIFENTQALVDGFQDLADKHNISLTTNIAGSMFGIFFTDVEKVTNYKQAINCNTEQFNKFYHGMLEQGVYLAPASYEAGFVSKAHDAEVIEKTLAAADKVFSTL.

An N6-(pyridoxal phosphate)lysine modification is found at K265.

The protein belongs to the class-III pyridoxal-phosphate-dependent aminotransferase family. HemL subfamily. As to quaternary structure, homodimer. Requires pyridoxal 5'-phosphate as cofactor.

The protein localises to the cytoplasm. The enzyme catalyses (S)-4-amino-5-oxopentanoate = 5-aminolevulinate. It functions in the pathway porphyrin-containing compound metabolism; protoporphyrin-IX biosynthesis; 5-aminolevulinate from L-glutamyl-tRNA(Glu): step 2/2. The chain is Glutamate-1-semialdehyde 2,1-aminomutase from Alteromonas mediterranea (strain DSM 17117 / CIP 110805 / LMG 28347 / Deep ecotype).